Here is a 390-residue protein sequence, read N- to C-terminus: HIT domain-containing protein DDB_G0272839 (390 aa).

The disordered stretch occupies residues 168-201 (DNENEKEKEKEMELDNDNTNTESIPPITSKSTST). Positions 184 to 201 (DNTNTESIPPITSKSTST) are enriched in low complexity. One can recognise an HIT domain in the interval 232-343 (YFCNKPESFL…ISNDYNTKYL (112 aa)).

In Dictyostelium discoideum (Social amoeba), this protein is HIT domain-containing protein DDB_G0272839.